The sequence spans 258 residues: Polysialic acid transport protein KpsM (258 aa).

The ABC transmembrane type-2 domain occupies 30–251 (LGYLWAILEP…FIGLALYRTR (222 aa)). The next 6 helical transmembrane spans lie at 33 to 53 (LWAI…FGYI), 61 to 81 (ISFP…SSIS), 110 to 130 (ALLE…IVWM), 144 to 164 (VLTW…FMVV), 175 to 195 (LPIL…LHSI), and 227 to 247 (GVSL…GLAL).

It belongs to the ABC-2 integral membrane protein family.

The protein localises to the cell inner membrane. KpsM and KpsT constitute a system for the transport of polysialic acid across the cytoplasmic membrane. This is Polysialic acid transport protein KpsM (kpsM) from Escherichia coli.